The following is a 561-amino-acid chain: MLLEQQKQLISLIQAAVAQCLPEAQAQVQLERPKVAAHGDIATNVAMQLAKPARRNPRELAQGIVDALMAQPQARELIQDAEIAGPGFINFRLTPAARQAVVQAVASQADAYGRAPRNGEKVLVEFVSANPTGPLHVGHARQAALGDAICRLYDASGWDVTREFYYNDAGNQIDNLAISVQARGRGIAPDAPDYPADGYKGDYIVEIARDFAARKSVQASDGQPVTATGDLDSLDDIRAFAVAYLRREQDLDLQAFGLAFDNYFLESSLYASGRVQETVDTLVAKGHTYEEGGALWLRTTELGTGDDKDRVMRKSEGGYTYFVPDVAYHKVKWERGFHHAVNIQGSDHHGTVARVRAGLQGLEAGIPKDFPAYVLHKMVKVMRGGEEVKISKRAGSYVTMRDLIDWVGRDAVRYFLIQRRADTEFVFDIDLALSKSDENPVYYIQYAHARICTMIGNSGASAAEIAQADTALLTAPSEYALLQRLAEFPQVVALAAQELAPHHVAFWLRDCASDFHAWYNAERVLVDEPALKLARLRLAATTRQVLANGLALLGVSAPDRM.

The 'HIGH' region motif lies at 129–139 (ANPTGPLHVGH).

Belongs to the class-I aminoacyl-tRNA synthetase family. In terms of assembly, monomer.

The protein resides in the cytoplasm. It catalyses the reaction tRNA(Arg) + L-arginine + ATP = L-arginyl-tRNA(Arg) + AMP + diphosphate. The sequence is that of Arginine--tRNA ligase from Bordetella bronchiseptica (strain ATCC BAA-588 / NCTC 13252 / RB50) (Alcaligenes bronchisepticus).